Reading from the N-terminus, the 457-residue chain is Transcription factor PCF7 (457 aa).

A coiled-coil region spans residues 58 to 84 (STLHYLLQEKERAQQAHEQLQIYQQQQ). The tract at residues 95 to 119 (RQPASRGPGGGGGGGDGGGSSGEST) is disordered. Gly residues predominate over residues 101–115 (GPGGGGGGGDGGGSS). A TCP domain is found at 140-198 (RKDRHSKVCTARGLRDRRVRLAAHTAIRFYDVQDRLGYDRPSKAVDWLMRNAKAAIDEL). Disordered stretches follow at residues 199-231 (PDRAEAPPPPAAASTEQPEATEQATSTSYGFGN) and 263-299 (KSLFPSSSTASGAASAGHDEYRGSPPDLLSRTTSNQQ). Composition is skewed to low complexity over residues 210-225 (AASTEQPEATEQATST) and 268-278 (SSSTASGAASA).

Forms homodimers and heterodimers.

Its subcellular location is the nucleus. Functionally, transcription activator. Binds the promoter core sequence 5'-GGNCC-3'. The polypeptide is Transcription factor PCF7 (PCF7) (Oryza sativa subsp. japonica (Rice)).